We begin with the raw amino-acid sequence, 220 residues long: Translation initiation factor 6 (220 aa).

It belongs to the eIF-6 family.

In terms of biological role, binds to the 50S ribosomal subunit and prevents its association with the 30S ribosomal subunit to form the 70S initiation complex. This is Translation initiation factor 6 from Pyrobaculum aerophilum (strain ATCC 51768 / DSM 7523 / JCM 9630 / CIP 104966 / NBRC 100827 / IM2).